The sequence spans 299 residues: Bifunctional methyltransferase-like/endonuclease (299 aa).

The segment at 1–80 (MLSSKLLDIN…NLIVSPMQKA (80 aa)) is probable methylated-DNA--protein-cysteine methyltransferase-like. The tract at residues 81–299 (LLEKEVKIIG…GRGDSNPGRD (219 aa)) is endonuclease V. 2 residues coordinate Mg(2+): Asp135 and Asn197.

In the N-terminal section; belongs to the MGMT family. This sequence in the C-terminal section; belongs to the endonuclease V family. The cofactor is Mg(2+).

The protein resides in the cytoplasm. It catalyses the reaction Endonucleolytic cleavage at apurinic or apyrimidinic sites to products with a 5'-phosphate.. DNA repair enzyme involved in the repair of deaminated bases. Selectively cleaves double-stranded DNA at the second phosphodiester bond 3' to a deoxyinosine leaving behind the intact lesion on the nicked DNA. The sequence is that of Bifunctional methyltransferase-like/endonuclease from Nanoarchaeum equitans (strain Kin4-M).